The following is a 242-amino-acid chain: Probable 2-phosphosulfolactate phosphatase (242 aa).

Belongs to the ComB family. Mg(2+) is required as a cofactor.

The catalysed reaction is (2R)-O-phospho-3-sulfolactate + H2O = (2R)-3-sulfolactate + phosphate. This chain is Probable 2-phosphosulfolactate phosphatase, found in Prochlorococcus marinus (strain NATL2A).